The chain runs to 131 residues: Small ribosomal subunit protein uS8 (131 aa).

Belongs to the universal ribosomal protein uS8 family. Part of the 30S ribosomal subunit. Contacts proteins S5 and S12.

Its function is as follows. One of the primary rRNA binding proteins, it binds directly to 16S rRNA central domain where it helps coordinate assembly of the platform of the 30S subunit. The protein is Small ribosomal subunit protein uS8 of Sulfurovum sp. (strain NBC37-1).